Reading from the N-terminus, the 216-residue chain is Tail fiber protein p36 (216 aa).

As to quaternary structure, the distal half-fiber contains two molecules each of Gp36 and Gp37 and one molecule of Gp35.

It is found in the virion. In terms of biological role, structural component of the distal-half tail fiber. The protein is Tail fiber protein p36 (36) of Enterobacteria phage Ox2 (Bacteriophage Ox2).